The chain runs to 440 residues: Zinc finger MYND domain-containing protein 10 (440 aa).

Cys-394, Cys-397, Cys-405, Cys-408, Cys-414, Cys-418, His-426, and Cys-430 together coordinate Zn(2+). The MYND-type zinc finger occupies 394–430 (CGYCNAEASKRCSRCQNVWYCCRECQVKHWEKHGKTC).

It belongs to the ZMYND10 family. As to quaternary structure, interacts (via C-terminus) with DNAAF11 (via CS domain); this interaction stabilizes DNAAF11 at the protein level. Interacts (via C-terminus) with DNAL1; this interaction stabilizes DNAL1 at the protein level. Interacts with DNAAF4, HSPA8, IQUB, RUVBL2 and DYNTL5. Expressed in the testis. Expressed in the tracheal epithelium. Restricted to regions containing motile cilia.

Its subcellular location is the cytoplasm. It is found in the cytoskeleton. It localises to the microtubule organizing center. The protein localises to the centrosome. The protein resides in the centriolar satellite. Its subcellular location is the apical cell membrane. It is found in the dynein axonemal particle. Its function is as follows. Plays a role in axonemal structure organization and motility. Involved in axonemal pre-assembly of inner and outer dynein arms (IDA and ODA, respectively) for proper axoneme building for cilia motility. May act by indirectly regulating transcription of dynein proteins. In Mus musculus (Mouse), this protein is Zinc finger MYND domain-containing protein 10 (Zmynd10).